A 308-amino-acid chain; its full sequence is Ornithine carbamoyltransferase (308 aa).

Carbamoyl phosphate contacts are provided by residues 56 to 59 (STRT), Gln-83, Arg-107, and 134 to 137 (HPCQ). Residues Asn-165, Asp-225, and 229 to 230 (SM) each bind L-ornithine. Carbamoyl phosphate is bound by residues 266–267 (CL) and Arg-294.

It belongs to the aspartate/ornithine carbamoyltransferase superfamily. OTCase family.

It is found in the cytoplasm. It catalyses the reaction carbamoyl phosphate + L-ornithine = L-citrulline + phosphate + H(+). The protein operates within amino-acid biosynthesis; L-arginine biosynthesis; L-arginine from L-ornithine and carbamoyl phosphate: step 1/3. Functionally, reversibly catalyzes the transfer of the carbamoyl group from carbamoyl phosphate (CP) to the N(epsilon) atom of ornithine (ORN) to produce L-citrulline. The protein is Ornithine carbamoyltransferase of Paracoccus denitrificans (strain Pd 1222).